The chain runs to 469 residues: UDP-N-acetylmuramoylalanine--D-glutamate ligase (469 aa).

121-127 (GTNGKST) serves as a coordination point for ATP.

This sequence belongs to the MurCDEF family.

Its subcellular location is the cytoplasm. The catalysed reaction is UDP-N-acetyl-alpha-D-muramoyl-L-alanine + D-glutamate + ATP = UDP-N-acetyl-alpha-D-muramoyl-L-alanyl-D-glutamate + ADP + phosphate + H(+). It participates in cell wall biogenesis; peptidoglycan biosynthesis. In terms of biological role, cell wall formation. Catalyzes the addition of glutamate to the nucleotide precursor UDP-N-acetylmuramoyl-L-alanine (UMA). The chain is UDP-N-acetylmuramoylalanine--D-glutamate ligase from Rhodopseudomonas palustris (strain ATCC BAA-98 / CGA009).